The primary structure comprises 338 residues: Anthranilate phosphoribosyltransferase (338 aa).

Residues glycine 81, 84–85, threonine 89, 91–94, 109–117, and serine 121 each bind 5-phospho-alpha-D-ribose 1-diphosphate; these read GD, NVST, and KHGNRSVSS. Glycine 81 lines the anthranilate pocket. Serine 93 contributes to the Mg(2+) binding site. Asparagine 112 serves as a coordination point for anthranilate. Arginine 167 is an anthranilate binding site. Mg(2+)-binding residues include aspartate 226 and glutamate 227.

It belongs to the anthranilate phosphoribosyltransferase family. In terms of assembly, homodimer. Mg(2+) serves as cofactor.

It carries out the reaction N-(5-phospho-beta-D-ribosyl)anthranilate + diphosphate = 5-phospho-alpha-D-ribose 1-diphosphate + anthranilate. Its pathway is amino-acid biosynthesis; L-tryptophan biosynthesis; L-tryptophan from chorismate: step 2/5. Functionally, catalyzes the transfer of the phosphoribosyl group of 5-phosphorylribose-1-pyrophosphate (PRPP) to anthranilate to yield N-(5'-phosphoribosyl)-anthranilate (PRA). The chain is Anthranilate phosphoribosyltransferase from Alkalilimnicola ehrlichii (strain ATCC BAA-1101 / DSM 17681 / MLHE-1).